The sequence spans 206 residues: Large ribosomal subunit protein uL13y (206 aa).

Belongs to the universal ribosomal protein uL13 family.

This chain is Large ribosomal subunit protein uL13y (RPL13AB), found in Arabidopsis thaliana (Mouse-ear cress).